The chain runs to 253 residues: tRNA-cytidine(32) 2-sulfurtransferase 2 (253 aa).

A PP-loop motif motif is present at residues 33-38; the sequence is SGGKDS. Positions 108, 111, and 199 each coordinate [4Fe-4S] cluster.

This sequence belongs to the TtcA family. Homodimer. Mg(2+) is required as a cofactor. Requires [4Fe-4S] cluster as cofactor.

It localises to the cytoplasm. The enzyme catalyses cytidine(32) in tRNA + S-sulfanyl-L-cysteinyl-[cysteine desulfurase] + AH2 + ATP = 2-thiocytidine(32) in tRNA + L-cysteinyl-[cysteine desulfurase] + A + AMP + diphosphate + H(+). The protein operates within tRNA modification. In terms of biological role, catalyzes the ATP-dependent 2-thiolation of cytidine in position 32 of tRNA, to form 2-thiocytidine (s(2)C32). The sulfur atoms are provided by the cysteine/cysteine desulfurase (IscS) system. The chain is tRNA-cytidine(32) 2-sulfurtransferase 2 from Francisella tularensis subsp. novicida (strain U112).